A 188-amino-acid chain; its full sequence is MSLISRLRAVVAGDDYLDGELDDFAYDDEQDDQDQRALQADGGALATIGDSNPFDLGGDLPGSNVIGMPGISNAAAEVNVMEPRSFDEMPRAIQALRERKTVILNLTMMEPDQAQRAVDFVAGGTFAIDGHQERVGESIFLFAPSCVTVTNTGHDEASAPTVVSREADAADVDEYASAPSPAWGAAAL.

The protein belongs to the SepF family. Homodimer. Interacts with FtsZ.

Its subcellular location is the cytoplasm. Cell division protein that is part of the divisome complex and is recruited early to the Z-ring. Probably stimulates Z-ring formation, perhaps through the cross-linking of FtsZ protofilaments. Its function overlaps with FtsA. The chain is Cell division protein SepF from Synechococcus sp. (strain CC9605).